Here is a 75-residue protein sequence, read N- to C-terminus: Protein SlyX homolog (75 aa).

This sequence belongs to the SlyX family.

This Vibrio campbellii (strain ATCC BAA-1116) protein is Protein SlyX homolog.